The chain runs to 366 residues: Cobalt-precorrin-5B C(1)-methyltransferase (366 aa).

It belongs to the CbiD family.

It catalyses the reaction Co-precorrin-5B + S-adenosyl-L-methionine = Co-precorrin-6A + S-adenosyl-L-homocysteine. Its pathway is cofactor biosynthesis; adenosylcobalamin biosynthesis; cob(II)yrinate a,c-diamide from sirohydrochlorin (anaerobic route): step 6/10. Functionally, catalyzes the methylation of C-1 in cobalt-precorrin-5B to form cobalt-precorrin-6A. The polypeptide is Cobalt-precorrin-5B C(1)-methyltransferase (Paraburkholderia phymatum (strain DSM 17167 / CIP 108236 / LMG 21445 / STM815) (Burkholderia phymatum)).